A 288-amino-acid chain; its full sequence is Ribosomal RNA small subunit methyltransferase A (288 aa).

6 residues coordinate S-adenosyl-L-methionine: asparagine 18, leucine 20, glycine 45, glutamate 66, aspartate 91, and asparagine 118.

Belongs to the class I-like SAM-binding methyltransferase superfamily. rRNA adenine N(6)-methyltransferase family. RsmA subfamily.

The protein resides in the cytoplasm. The catalysed reaction is adenosine(1518)/adenosine(1519) in 16S rRNA + 4 S-adenosyl-L-methionine = N(6)-dimethyladenosine(1518)/N(6)-dimethyladenosine(1519) in 16S rRNA + 4 S-adenosyl-L-homocysteine + 4 H(+). Specifically dimethylates two adjacent adenosines (A1518 and A1519) in the loop of a conserved hairpin near the 3'-end of 16S rRNA in the 30S particle. May play a critical role in biogenesis of 30S subunits. The sequence is that of Ribosomal RNA small subunit methyltransferase A from Pasteurella multocida (strain Pm70).